Consider the following 201-residue polypeptide: MAGEASPVAQNPELVLASASPRRLELLSRLGVSPARVLATDLDESPLKGERPRDHAVRLAAEKARAAAALAPGCLVLAGDTVVGTGARILPKAEDEATARQCLALLSGRRHRVFSAVAVITPDGTLREALSETILRFKRLSDEEIEAYIAGGEWHGKAGGYAIQGSAEGFCAWLSGSHSGVVGLPLYETRRLLRAAGLDVR.

The active-site Proton acceptor is the D80.

The protein belongs to the Maf family. YhdE subfamily. A divalent metal cation is required as a cofactor.

The protein resides in the cytoplasm. It catalyses the reaction dTTP + H2O = dTMP + diphosphate + H(+). It carries out the reaction UTP + H2O = UMP + diphosphate + H(+). In terms of biological role, nucleoside triphosphate pyrophosphatase that hydrolyzes dTTP and UTP. May have a dual role in cell division arrest and in preventing the incorporation of modified nucleotides into cellular nucleic acids. The chain is dTTP/UTP pyrophosphatase from Novosphingobium aromaticivorans (strain ATCC 700278 / DSM 12444 / CCUG 56034 / CIP 105152 / NBRC 16084 / F199).